The primary structure comprises 313 residues: Protoheme IX farnesyltransferase (313 aa).

8 consecutive transmembrane segments (helical) span residues 32–52, 53–73, 120–140, 153–173, 180–200, 226–246, 248–268, and 284–304; these read VMSL…GDFH, PVLA…AGAL, ILVN…YVVI, IVIG…AVTG, LLLF…LALF, ILLY…LGYF, AIYG…ALRV, and LFKF…LEVV.

It belongs to the UbiA prenyltransferase family. Protoheme IX farnesyltransferase subfamily.

It is found in the cell inner membrane. The catalysed reaction is heme b + (2E,6E)-farnesyl diphosphate + H2O = Fe(II)-heme o + diphosphate. It participates in porphyrin-containing compound metabolism; heme O biosynthesis; heme O from protoheme: step 1/1. Converts heme B (protoheme IX) to heme O by substitution of the vinyl group on carbon 2 of heme B porphyrin ring with a hydroxyethyl farnesyl side group. This Rhodopseudomonas palustris (strain HaA2) protein is Protoheme IX farnesyltransferase.